The following is a 276-amino-acid chain: NAD kinase (276 aa).

The Proton acceptor role is filled by D61. NAD(+) contacts are provided by residues 61 to 62 (DG), R66, 135 to 136 (NE), R146, H163, D165, and A200.

This sequence belongs to the NAD kinase family. A divalent metal cation is required as a cofactor.

The protein localises to the cytoplasm. The catalysed reaction is NAD(+) + ATP = ADP + NADP(+) + H(+). In terms of biological role, involved in the regulation of the intracellular balance of NAD and NADP, and is a key enzyme in the biosynthesis of NADP. Catalyzes specifically the phosphorylation on 2'-hydroxyl of the adenosine moiety of NAD to yield NADP. This chain is NAD kinase, found in Chloroflexus aggregans (strain MD-66 / DSM 9485).